We begin with the raw amino-acid sequence, 183 residues long: Capsid protein (183 aa).

A disordered region spans residues Leu-143–Cys-183. Over residues Val-149–Gln-177 the composition is skewed to basic residues. A phosphoserine; by host mark is found at Ser-155, Ser-162, and Ser-170. The stretch at Ser-155–Pro-161 is one 1; half-length repeat. The segment at Ser-155–Gln-177 is 3 X 8 AA repeats of S-P-R-R-R-[PR]-S-Q. The Bipartite nuclear localization signal signature appears at Arg-158–Arg-175. Repeat copies occupy residues Ser-162–Gln-169 and Ser-170–Gln-177. Residues Gln-177–Cys-183 form an RNA binding region.

The protein belongs to the orthohepadnavirus core antigen family. In terms of assembly, homodimerizes, then multimerizes. Interacts with cytosol exposed regions of viral L glycoprotein present in the reticulum-to-Golgi compartment. Interacts with human FLNB. Phosphorylated form interacts with host importin alpha; this interaction depends on the exposure of the NLS, which itself depends upon genome maturation and/or phosphorylation of the capsid protein. Interacts with host NUP153. Post-translationally, phosphorylated by host SRPK1, SRPK2, and maybe protein kinase C or GAPDH. Phosphorylation is critical for pregenomic RNA packaging. Protein kinase C phosphorylation is stimulated by HBx protein and may play a role in transport of the viral genome to the nucleus at the late step during the viral replication cycle.

The protein localises to the virion. The protein resides in the host cytoplasm. Self assembles to form an icosahedral capsid. Most capsids appear to be large particles with an icosahedral symmetry of T=4 and consist of 240 copies of capsid protein, though a fraction forms smaller T=3 particles consisting of 180 capsid proteins. Entering capsids are transported along microtubules to the nucleus. Phosphorylation of the capsid is thought to induce exposure of nuclear localization signal in the C-terminal portion of the capsid protein that allows binding to the nuclear pore complex via the importin (karyopherin-) alpha and beta. Capsids are imported in intact form through the nuclear pore into the nuclear basket, where it probably binds NUP153. Only capsids that contain the mature viral genome can release the viral DNA and capsid protein into the nucleoplasm. Immature capsids get stuck in the basket. Capsids encapsulate the pre-genomic RNA and the P protein. Pre-genomic RNA is reverse-transcribed into DNA while the capsid is still in the cytoplasm. The capsid can then either be directed to the nucleus, providing more genomes for transcription, or bud through the endoplasmic reticulum to provide new virions. In Homo sapiens (Human), this protein is Capsid protein.